The following is a 338-amino-acid chain: tRNA N6-adenosine threonylcarbamoyltransferase (338 aa).

Residues His109 and His113 each contribute to the Fe cation site. Substrate-binding positions include 132 to 136, Asp165, Gly178, and Asn277; that span reads AISGA. Asp302 lines the Fe cation pocket.

Belongs to the KAE1 / TsaD family. Fe(2+) is required as a cofactor.

The protein localises to the cytoplasm. The enzyme catalyses L-threonylcarbamoyladenylate + adenosine(37) in tRNA = N(6)-L-threonylcarbamoyladenosine(37) in tRNA + AMP + H(+). Required for the formation of a threonylcarbamoyl group on adenosine at position 37 (t(6)A37) in tRNAs that read codons beginning with adenine. Is involved in the transfer of the threonylcarbamoyl moiety of threonylcarbamoyl-AMP (TC-AMP) to the N6 group of A37, together with TsaE and TsaB. TsaD likely plays a direct catalytic role in this reaction. The chain is tRNA N6-adenosine threonylcarbamoyltransferase from Chlamydia trachomatis serovar L2b (strain UCH-1/proctitis).